Consider the following 417-residue polypeptide: NADH-quinone oxidoreductase subunit D (417 aa).

The protein belongs to the complex I 49 kDa subunit family. As to quaternary structure, NDH-1 is composed of 14 different subunits. Subunits NuoB, C, D, E, F, and G constitute the peripheral sector of the complex.

Its subcellular location is the cell inner membrane. It carries out the reaction a quinone + NADH + 5 H(+)(in) = a quinol + NAD(+) + 4 H(+)(out). NDH-1 shuttles electrons from NADH, via FMN and iron-sulfur (Fe-S) centers, to quinones in the respiratory chain. The immediate electron acceptor for the enzyme in this species is believed to be ubiquinone. Couples the redox reaction to proton translocation (for every two electrons transferred, four hydrogen ions are translocated across the cytoplasmic membrane), and thus conserves the redox energy in a proton gradient. The sequence is that of NADH-quinone oxidoreductase subunit D from Polaromonas naphthalenivorans (strain CJ2).